We begin with the raw amino-acid sequence, 293 residues long: uncharacterized protein (293 aa).

The active site involves D119.

It belongs to the pseudouridine synthase RluA family.

The catalysed reaction is a uridine in RNA = a pseudouridine in RNA. This is an uncharacterized protein from Helicobacter pylori (strain J99 / ATCC 700824) (Campylobacter pylori J99).